Reading from the N-terminus, the 317-residue chain is Universal stress protein MT2052 (317 aa).

Residues Gly-13, 128–134, 142–143, Gly-175, Asp-208, 277–283, and 291–293 contribute to the ATP site; these read GYRGQGA, SV, GSHGRGG, and SVS.

It belongs to the universal stress protein A family.

This chain is Universal stress protein MT2052, found in Mycobacterium tuberculosis (strain CDC 1551 / Oshkosh).